Reading from the N-terminus, the 1147-residue chain is Putative ATP-dependent RNA helicase L377 (1147 aa).

The region spanning 108–315 is the Helicase ATP-binding domain; it reads INPNTPYRGL…VELINYLRPK (208 aa). 121 to 128 contributes to the ATP binding site; the sequence is WGTGVGKS. A DEAH box motif is present at residues 264–267; sequence DEAH.

It belongs to the DEAD box helicase family. DEAH subfamily.

The protein localises to the virion. It carries out the reaction ATP + H2O = ADP + phosphate + H(+). The chain is Putative ATP-dependent RNA helicase L377 from Acanthamoeba polyphaga (Amoeba).